Reading from the N-terminus, the 192-residue chain is MSLQIGKPAPDFKGTAVVNGAFEEIKLADYKGKWVFLGFYPLDFTFVCPTEIVAFSEAASKFAERNAQVILTSTDSEYSHLAFINTPRKEGGLGGINIPLLADPSHKVSRDYGVLIEDAGVAFRGLFLIDPKGVLRQITINDLPVGRSVDEALRLLDAFQFVEEHGEVCPANWHKGSDTIDTKNPEKYFSKH.

The Thioredoxin domain occupies 3–161 (LQIGKPAPDF…ALRLLDAFQF (159 aa)). Cys-48 acts as the Cysteine sulfenic acid (-SOH) intermediate in catalysis. Residues Ser-105 and Ser-148 each carry the phosphoserine modification.

Belongs to the peroxiredoxin family. AhpC/Prx1 subfamily. Homodimer; disulfide-linked, upon oxidation. Interacts with srx1 in response to oxidative stress. Interacts with pap1 via transient disulfide linkages. The enzyme can be inactivated by further oxidation of the cysteine sulfenic acid (C(P)-SOH) to sulphinic acid (C(P)-SO2H) instead of its condensation to a disulfide bond. It can be reactivated by forming a transient disulfide bond with sulfiredoxin srx1, which reduces the cysteine sulfinic acid in an ATP- and Mg-dependent manner.

It is found in the cytoplasm. The protein resides in the nucleus. It carries out the reaction a hydroperoxide + [thioredoxin]-dithiol = an alcohol + [thioredoxin]-disulfide + H2O. In terms of biological role, thiol-specific peroxidase that catalyzes the reduction of hydrogen peroxide and organic hydroperoxides to water and alcohols, respectively. Plays a role in cell protection against oxidative stress by detoxifying peroxides and as sensor of hydrogen peroxide-mediated signaling events. Relays hydrogen peroxide as a signal to the transcription factor pap1 by inducing the formation of intramolecular disulfide bonds in pap1, which causes its nuclear accumulation and activation. Reduced by srx1 and this regulation acts as a molecular switch controlling the transcriptional response to hydrogen peroxide. This is Peroxiredoxin tpx1 (tpx1) from Schizosaccharomyces pombe (strain 972 / ATCC 24843) (Fission yeast).